Reading from the N-terminus, the 227-residue chain is ATP phosphoribosyltransferase (227 aa).

It belongs to the ATP phosphoribosyltransferase family. Short subfamily. In terms of assembly, heteromultimer composed of HisG and HisZ subunits.

The protein localises to the cytoplasm. The enzyme catalyses 1-(5-phospho-beta-D-ribosyl)-ATP + diphosphate = 5-phospho-alpha-D-ribose 1-diphosphate + ATP. Its pathway is amino-acid biosynthesis; L-histidine biosynthesis; L-histidine from 5-phospho-alpha-D-ribose 1-diphosphate: step 1/9. In terms of biological role, catalyzes the condensation of ATP and 5-phosphoribose 1-diphosphate to form N'-(5'-phosphoribosyl)-ATP (PR-ATP). Has a crucial role in the pathway because the rate of histidine biosynthesis seems to be controlled primarily by regulation of HisG enzymatic activity. This is ATP phosphoribosyltransferase from Nitrosospira multiformis (strain ATCC 25196 / NCIMB 11849 / C 71).